We begin with the raw amino-acid sequence, 138 residues long: Cysteine desulfuration protein SufE (138 aa).

C51 (cysteine persulfide intermediate) is an active-site residue.

Belongs to the SufE family. As to quaternary structure, homodimer. Interacts with SufS.

The protein resides in the cytoplasm. The protein operates within cofactor biosynthesis; iron-sulfur cluster biosynthesis. Participates in cysteine desulfuration mediated by SufS. Cysteine desulfuration mobilizes sulfur from L-cysteine to yield L-alanine and constitutes an essential step in sulfur metabolism for biosynthesis of a variety of sulfur-containing biomolecules. Functions as a sulfur acceptor for SufS, by mediating the direct transfer of the sulfur atom from the S-sulfanylcysteine of SufS, an intermediate product of cysteine desulfuration process. The chain is Cysteine desulfuration protein SufE from Klebsiella pneumoniae subsp. pneumoniae (strain ATCC 700721 / MGH 78578).